Consider the following 311-residue polypeptide: D-alanine--D-alanine ligase (311 aa).

Positions 106-301 (KLLWRGAELP…FDELCWRILL (196 aa)) constitute an ATP-grasp domain. Residue 132-187 (IGSVGLPLMIKPAHEGSSIGMAKVERPEELEAARAEAARYDDLVLAERWIEGGEYT) participates in ATP binding. Residues D255, E268, and N270 each coordinate Mg(2+).

Belongs to the D-alanine--D-alanine ligase family. Mg(2+) is required as a cofactor. Mn(2+) serves as cofactor.

Its subcellular location is the cytoplasm. It catalyses the reaction 2 D-alanine + ATP = D-alanyl-D-alanine + ADP + phosphate + H(+). Its pathway is cell wall biogenesis; peptidoglycan biosynthesis. Cell wall formation. The sequence is that of D-alanine--D-alanine ligase from Alkalilimnicola ehrlichii (strain ATCC BAA-1101 / DSM 17681 / MLHE-1).